Here is a 917-residue protein sequence, read N- to C-terminus: Glutamate receptor (917 aa).

Positions methionine 1–serine 19 are cleaved as a signal peptide. Residues threonine 20–serine 556 are Extracellular-facing. 12 N-linked (GlcNAc...) asparagine glycosylation sites follow: asparagine 62, asparagine 95, asparagine 121, asparagine 125, asparagine 229, asparagine 251, asparagine 261, asparagine 272, asparagine 418, asparagine 419, asparagine 424, and asparagine 491. A helical membrane pass occupies residues serine 557–valine 577. The Cytoplasmic portion of the chain corresponds to serine 578–serine 631. Residues valine 632–leucine 652 form a helical membrane-spanning segment. The Extracellular portion of the chain corresponds to threonine 653 to asparagine 818. Asparagine 775 carries an N-linked (GlcNAc...) asparagine glycan. Residues valine 819–phenylalanine 839 traverse the membrane as a helical segment. Topologically, residues glutamate 840–valine 917 are cytoplasmic. Residues histidine 871–threonine 896 are disordered.

The protein belongs to the glutamate-gated ion channel (TC 1.A.10.1) family.

The protein localises to the cell membrane. It localises to the postsynaptic cell membrane. Its function is as follows. Receptor for glutamate. L-glutamate acts as an excitatory neurotransmitter at many synapses in the central nervous system. The postsynaptic actions of Glu are mediated by a variety of receptors. This Lymnaea stagnalis (Great pond snail) protein is Glutamate receptor.